Consider the following 607-residue polypeptide: UvrABC system protein C (607 aa).

The 80-residue stretch at 15–94 (ENPGVYLMKN…IKRHRPYFNV (80 aa)) folds into the GIY-YIG domain. One can recognise a UVR domain in the interval 204–239 (DQVLKLLIRLMNEASARLDYETAALRRDQIASIKEV).

Belongs to the UvrC family. As to quaternary structure, interacts with UvrB in an incision complex.

It localises to the cytoplasm. The UvrABC repair system catalyzes the recognition and processing of DNA lesions. UvrC both incises the 5' and 3' sides of the lesion. The N-terminal half is responsible for the 3' incision and the C-terminal half is responsible for the 5' incision. The polypeptide is UvrABC system protein C (Dehalococcoides mccartyi (strain CBDB1)).